A 445-amino-acid polypeptide reads, in one-letter code: Response regulator protein PilR (445 aa).

One can recognise a Response regulatory domain in the interval 5-119 (KALIVDDEPD…RLRELVATAL (115 aa)). Residues D11 and D54 each carry the 4-aspartylphosphate modification. Residues 135–364 (LLGESPPMRA…LENMLERAYT (230 aa)) form the Sigma-54 factor interaction domain. Residues 163–170 (GESGSGKE) and 226–235 (ASGGTLFLDE) contribute to the ATP site. The segment at residues 418–437 (RWNRTAAAQRLGLTFRSMRY) is a DNA-binding region (H-T-H motif).

Post-translationally, phosphorylated by PilS.

It localises to the cytoplasm. Member of the two-component regulatory system PilS/PilR that regulates the expression of multiple genes including the type IV pilus (T4P) major subunit PilA. Thereby, plays a major role in the regulation of multiple motility pathways. Upon appropriate environmental signals, the histidine kinase PilS transfers the phosphoryl group onto PilR. In turn, PilR functions as a transcriptional activator by direct binding to a cis-acting sequence upstream of the pilin gene promoter leading to its activation. This is Response regulator protein PilR (pilR) from Pseudomonas aeruginosa (strain ATCC 15692 / DSM 22644 / CIP 104116 / JCM 14847 / LMG 12228 / 1C / PRS 101 / PAO1).